A 209-amino-acid chain; its full sequence is Ion-translocating oxidoreductase complex subunit G (209 aa).

Residues 9–29 (GLVLAIFACASTGLVAVTHYL) traverse the membrane as a helical segment. Position 175 is an FMN phosphoryl threonine (threonine 175).

The protein belongs to the RnfG family. As to quaternary structure, the complex is composed of six subunits: RnfA, RnfB, RnfC, RnfD, RnfE and RnfG. It depends on FMN as a cofactor.

It is found in the cell inner membrane. Part of a membrane-bound complex that couples electron transfer with translocation of ions across the membrane. In Vibrio atlanticus (strain LGP32) (Vibrio splendidus (strain Mel32)), this protein is Ion-translocating oxidoreductase complex subunit G.